Here is a 77-residue protein sequence, read N- to C-terminus: Acyl carrier protein (77 aa).

Residues 2–77 enclose the Carrier domain; it reads STVEERVKKI…DAIDYILANQ (76 aa). O-(pantetheine 4'-phosphoryl)serine is present on serine 37.

Belongs to the acyl carrier protein (ACP) family. Post-translationally, 4'-phosphopantetheine is transferred from CoA to a specific serine of apo-ACP by AcpS. This modification is essential for activity because fatty acids are bound in thioester linkage to the sulfhydryl of the prosthetic group.

The protein resides in the cytoplasm. It functions in the pathway lipid metabolism; fatty acid biosynthesis. Its function is as follows. Carrier of the growing fatty acid chain in fatty acid biosynthesis. This Hahella chejuensis (strain KCTC 2396) protein is Acyl carrier protein.